Reading from the N-terminus, the 524-residue chain is CTP synthase (524 aa).

An amidoligase domain region spans residues 1–263 (MKKYVIVTGG…HEKIASKLNV (263 aa)). S13 provides a ligand contact to CTP. UTP is bound at residue S13. ATP is bound by residues 14 to 19 (GIGKGI) and D71. The Mg(2+) site is built by D71 and E137. Residues 144–146 (DIE), 184–189 (KTKPTQ), and K220 each bind CTP. Residues 184–189 (KTKPTQ) and K220 contribute to the UTP site. In terms of domain architecture, Glutamine amidotransferase type-1 spans 282–524 (RIALVGKYLG…YLRKVLEGSQ (243 aa)). An L-glutamine-binding site is contributed by G342. C369 acts as the Nucleophile; for glutamine hydrolysis in catalysis. Residues 370–373 (LGMQ), E393, and R451 contribute to the L-glutamine site. Active-site residues include H499 and E501.

It belongs to the CTP synthase family. As to quaternary structure, homotetramer.

It catalyses the reaction UTP + L-glutamine + ATP + H2O = CTP + L-glutamate + ADP + phosphate + 2 H(+). It carries out the reaction L-glutamine + H2O = L-glutamate + NH4(+). The enzyme catalyses UTP + NH4(+) + ATP = CTP + ADP + phosphate + 2 H(+). Its pathway is pyrimidine metabolism; CTP biosynthesis via de novo pathway; CTP from UDP: step 2/2. Its activity is regulated as follows. Allosterically activated by GTP, when glutamine is the substrate; GTP has no effect on the reaction when ammonia is the substrate. The allosteric effector GTP functions by stabilizing the protein conformation that binds the tetrahedral intermediate(s) formed during glutamine hydrolysis. Inhibited by the product CTP, via allosteric rather than competitive inhibition. Functionally, catalyzes the ATP-dependent amination of UTP to CTP with either L-glutamine or ammonia as the source of nitrogen. Regulates intracellular CTP levels through interactions with the four ribonucleotide triphosphates. The chain is CTP synthase from Thermotoga maritima (strain ATCC 43589 / DSM 3109 / JCM 10099 / NBRC 100826 / MSB8).